We begin with the raw amino-acid sequence, 136 residues long: Protein NrdI (136 aa).

It belongs to the NrdI family.

Its function is as follows. Probably involved in ribonucleotide reductase function. The polypeptide is Protein NrdI (Shigella boydii serotype 4 (strain Sb227)).